The chain runs to 117 residues: Large ribosomal subunit protein bL20 (117 aa).

Belongs to the bacterial ribosomal protein bL20 family.

Its function is as follows. Binds directly to 23S ribosomal RNA and is necessary for the in vitro assembly process of the 50S ribosomal subunit. It is not involved in the protein synthesizing functions of that subunit. This chain is Large ribosomal subunit protein bL20, found in Rickettsia canadensis (strain McKiel).